The sequence spans 152 residues: Toxin Res (152 aa).

It belongs to the MbcT/ParT/Res family. In terms of assembly, homodimer. Forms a complex with cognate antitoxin Xre.

Functionally, toxic component of a type II toxin-antitoxin (TA) system. Expression in E.coli inhibits cell growth; bacteriostasis is neutralized by expression of cognate antitoxin Xre. Probably depletes intracellular NAD(+). The chain is Toxin Res from Yersinia enterocolitica serotype O:8 / biotype 1B (strain NCTC 13174 / 8081).